The primary structure comprises 417 residues: Blood group Rh(D) polypeptide (417 aa).

Helical transmembrane passes span 12-32, 44-64, 77-97, 107-127, 130-150, 167-187, 203-223, 238-258, 287-307, 334-354, and 358-378; these read CLPL…YFFT, LVAS…GLGF, VAFN…LDGF, VITL…LISV, VLGK…VTAL, MNMM…AWCL, TIPS…WPSF, VFNT…GSSL, LIPS…ISVG, LLGL…TVGA, and MIGF…VIAL.

The protein belongs to the ammonium transporter (TC 2.A.49) family. Rh subfamily. Post-translationally, palmitoylated. Restricted to tissues or cell lines expressing erythroid characters.

It localises to the cell membrane. In terms of biological role, may be part of an oligomeric complex which is likely to have a transport or channel function in the erythrocyte membrane. This is Blood group Rh(D) polypeptide (RHD) from Homo sapiens (Human).